The primary structure comprises 687 residues: MRLRNDCLVRLLTSWFGIFCLYEMTEGSAEPPPCPGARRRRLLLSLPNVFPGRTRAAPEPSVPSPPPSPPPPPPPPVSVPPPPSSPGGSESLIECPLCLVRQPPEEIPELLSCRHRSCLRCLRQYLRIEICESRVNLRCPECAERLSPQHVRAILRDPLLTRKYEEFLLRRCLAADPDCRWCPAPDCGYAVIAYGCASCPKLTCEREGCRTEFCYHCKHVWHPNQTCDMARQQRAPSLGVRRKHPSGISYGQESGSADDMKSCPRCSAYIIKMNDGSCNHMTCSVCGCEFCWLCMKEISDLHYLSPSGCTFWGKKPWSRKKKIIWQLSTLIGAPVGISLIAGIAIPAMVIGIPVYVGRKIHGRFENKKTSRHKKNLAVTGGVILSVIASPVVAAVSVGIGVPIMLAYVYGVVPVSLCRGGGCGVTTANGKGVKIDFEEDGPITVADAWRALKNPSIGESSMEGLTSVLSTSGSPTDGLSVLQGNYSETASFAALAGGTLTGGMLSGGRAKYCRLEVQADVQKETCQKDSVSLGAVSDSASTRAMAGSIISSYNPQEREVNNMEIQVHIEAKPSRYQLMSESSTEESLHASAPLVESEDAEACRNQVAACDITLAQPESIRSDLESSDAQSDDVPDLASEEYDSPHLFPPSPSNALQESPPHRMCAQEEGLCAHEESLSKVEIIELRV.

Positions methionine 1–cysteine 294 are required for ubiquitin ligase activity and for protection against staurosporin-induced cell death. A disordered region spans residues arginine 53–glycine 88. Residues proline 60 to serine 85 are compositionally biased toward pro residues. The tract at residues serine 91–glycine 313 is TRIAD supradomain. Zn(2+)-binding residues include cysteine 95, cysteine 98, cysteine 118, cysteine 121, cysteine 182, cysteine 187, cysteine 204, cysteine 209, cysteine 214, cysteine 217, histidine 222, cysteine 227, cysteine 263, and cysteine 266. The RING-type 1 zinc finger occupies cysteine 95–glutamate 144. The IBR-type zinc finger occupies threonine 161–cysteine 227. Residues cysteine 263–cysteine 294 form an RING-type 2; atypical zinc finger. Cysteine 278 is a catalytic residue. 6 residues coordinate Zn(2+): cysteine 283, cysteine 286, cysteine 291, cysteine 294, histidine 302, and cysteine 309. Transmembrane regions (helical) follow at residues leucine 330–isoleucine 350 and valine 391–valine 411. Positions serine 618–arginine 662 are disordered. Over residues glutamine 629–tyrosine 641 the composition is skewed to acidic residues.

This sequence belongs to the RBR family. RNF19 subfamily. As to quaternary structure, interacts with UBE2L3, UBE2L6 and UCKL1.

Its subcellular location is the cytoplasmic granule membrane. The protein localises to the endoplasmic reticulum membrane. It catalyses the reaction [E2 ubiquitin-conjugating enzyme]-S-ubiquitinyl-L-cysteine + [acceptor protein]-L-lysine = [E2 ubiquitin-conjugating enzyme]-L-cysteine + [acceptor protein]-N(6)-ubiquitinyl-L-lysine.. The protein operates within protein modification; protein ubiquitination. E3 ubiquitin-protein ligase which accepts ubiquitin from E2 ubiquitin-conjugating enzymes UBE2L3 and UBE2L6 in the form of a thioester and then directly transfers the ubiquitin to targeted substrates, such as UCKL1. Involved in the cytolytic activity of natural killer cells and cytotoxic T-cells. Protects against staurosporin-induced cell death. The polypeptide is E3 ubiquitin-protein ligase RNF19B (rnf19b) (Xenopus laevis (African clawed frog)).